A 244-amino-acid chain; its full sequence is MAIKGPRKHLKRLAAPANWQLPRKVKTFTVRPSPGPHSMDKSLPLLLVVRDVLKYADNAREAKKIIQTGKILIDGLKRKEYKHPAGLMDVLSIPEMDETYLVLFDESGRISLKKTDKTDVKLCKIVNKTVVKGGNIQLNLHDGRNQIVKVSDAAKAEEDVYKTGDSVLISIPEQSIAGHVAFGEGKLAYITGGKHVGEFAKIVEVENRALYSDIVTLENKDGEKFKTVKPYVFIVGQDEPVISM.

The region spanning 43-106 (LPLLLVVRDV…DETYLVLFDE (64 aa)) is the S4 RNA-binding domain.

The protein belongs to the eukaryotic ribosomal protein eS4 family.

This Methanococcus maripaludis (strain DSM 14266 / JCM 13030 / NBRC 101832 / S2 / LL) protein is Small ribosomal subunit protein eS4.